The chain runs to 203 residues: Potassium channel Cha6605_3372 (203 aa).

Topologically, residues 1 to 7 are cytoplasmic; sequence MVEAPEQ. A helical transmembrane segment spans residues 8–31; that stretch reads SETGRIEAFSDGVFAIAITLLVLE. The short motif at 12 to 18 is the RxxxFSD motif element; sequence RIEAFSD. Residues 32 to 52 are Extracellular-facing; it reads IKVPQHKIVETVGLVSSLLSL. The interval 37–42 is short helix H1; the sequence is HKIVET. The interval 44–50 is short helix H2; it reads GLVSSLL. A helical transmembrane segment spans residues 53–78; it reads WPSYLAFLTSFASILVMWVNHHRIFS. Topologically, residues 79–84 are cytoplasmic; it reads LVARTD. Residues 85 to 110 traverse the membrane as a helical segment; that stretch reads HAFFYWNGLLLMLVTFVPFPTALLAE. At 111–117 the chain is on the extracellular side; sequence YLIHPQA. The chain crosses the membrane as a helical span at residues 118–142; it reads RVAASVYAGIFLAIAIVFNRLWKHA. At 143-154 the chain is on the cytoplasmic side; that stretch reads ATADRLLAQKAD. A helical transmembrane segment spans residues 155-181; sequence RHEVDAITKQYRFGPGLYLVAFALSFI. The Extracellular portion of the chain corresponds to 182–183; sequence SV. Residues 184–199 form a helical membrane-spanning segment; sequence WLSVGVCFVLAIYFAL. The Cytoplasmic segment spans residues 200-203; the sequence is RSNA.

This sequence belongs to the TMEM175 family. In terms of assembly, homotetramer.

Its subcellular location is the membrane. The enzyme catalyses K(+)(in) = K(+)(out). In terms of biological role, potassium channel. The channel is permeable for K(+), Rb(+) and Cs(+), while it is unable to conduct Na(+). In Chamaesiphon minutus (strain ATCC 27169 / PCC 6605), this protein is Potassium channel Cha6605_3372.